A 344-amino-acid chain; its full sequence is Phosphate acyltransferase (344 aa).

It belongs to the PlsX family. As to quaternary structure, homodimer. Probably interacts with PlsY.

It localises to the cytoplasm. The catalysed reaction is a fatty acyl-[ACP] + phosphate = an acyl phosphate + holo-[ACP]. It participates in lipid metabolism; phospholipid metabolism. Functionally, catalyzes the reversible formation of acyl-phosphate (acyl-PO(4)) from acyl-[acyl-carrier-protein] (acyl-ACP). This enzyme utilizes acyl-ACP as fatty acyl donor, but not acyl-CoA. This Yersinia pestis bv. Antiqua (strain Antiqua) protein is Phosphate acyltransferase.